Here is a 103-residue protein sequence, read N- to C-terminus: Muscarinic toxin BM14 (103 aa).

Positions 1–21 (MKTLLLTLVVVTIICLDLGYT) are cleaved as a signal peptide. Intrachain disulfides connect C24–C45, C27–C37, C38–C72, C76–C90, and C91–C96.

The protein belongs to the three-finger toxin family. Ancestral subfamily. Orphan group XVII sub-subfamily. As to expression, expressed by the venom gland.

The protein localises to the secreted. This toxin inhibits the binding of [3H]quinuclidinyl benzilate to the M2 muscarinic acetylcholine (mAchR) receptor subtype (CHRM2). This is Muscarinic toxin BM14 from Bungarus multicinctus (Many-banded krait).